A 146-amino-acid chain; its full sequence is Probable glycine cleavage system H protein 1, mitochondrial (146 aa).

Residues 1–30 (MLKTLRFGTRAFGQNLNIAKRNFCTRYTND) constitute a mitochondrion transit peptide. The 83-residue stretch at 41–123 (NYRLGITDFA…MGDGWIVEYK (83 aa)) folds into the Lipoyl-binding domain. K82 is subject to N6-lipoyllysine.

This sequence belongs to the GcvH family. As to quaternary structure, the glycine cleavage system is composed of four proteins: P, T, L and H. It depends on (R)-lipoate as a cofactor.

The protein resides in the mitochondrion. Its function is as follows. The glycine cleavage system catalyzes the degradation of glycine. The H protein shuttles the methylamine group of glycine from the P protein to the T protein. This is Probable glycine cleavage system H protein 1, mitochondrial (gcvH1) from Dictyostelium discoideum (Social amoeba).